Here is a 118-residue protein sequence, read N- to C-terminus: uncharacterized protein (118 aa).

The protein to E.coli YeaO.

This is an uncharacterized protein from Mycobacterium bovis (strain ATCC BAA-935 / AF2122/97).